The following is a 306-amino-acid chain: Palmitoyl-protein thioesterase ABHD10, mitochondrial (306 aa).

The transit peptide at 1 to 52 (MAVARLAAVAAWVPCRSWGWAAVPFGPHRGLSVLLARIPQRAPRWLPACRQK) directs the protein to the mitochondrion. Residues 78–178 (IIFIPGYLSY…VVALIGVATA (101 aa)) enclose the AB hydrolase-1 domain. Active-site charge relay system residues include Ser152, Asp249, and His279.

The protein belongs to the AB hydrolase superfamily.

The protein localises to the mitochondrion. It catalyses the reaction S-hexadecanoyl-L-cysteinyl-[protein] + H2O = L-cysteinyl-[protein] + hexadecanoate + H(+). The enzyme catalyses mycophenolic acid O-acyl-beta-D-glucuronide + H2O = mycophenolate + D-glucuronate + H(+). Its activity is regulated as follows. Inhibited by palmostatin-B. Functionally, acts as an acyl-protein thioesterase that hydrolyzes fatty acids from acylated residues in proteins. Regulates the mitochondrial S-depalmitoylation of the nucleophilic active site residue of peroxiredoxin-5/PRDX5, a key antioxidant protein, therefore modulating mitochondrial antioxidant ability. Also catalyzes the deglucuronidation of mycophenolic acid acyl-glucuronide, an active metabolite of the immunosuppressant drug mycophenolate. This is Palmitoyl-protein thioesterase ABHD10, mitochondrial from Homo sapiens (Human).